Consider the following 123-residue polypeptide: Large ribosomal subunit protein uL18 (123 aa).

Belongs to the universal ribosomal protein uL18 family. Part of the 50S ribosomal subunit; part of the 5S rRNA/L5/L18/L25 subcomplex. Contacts the 5S and 23S rRNAs.

In terms of biological role, this is one of the proteins that bind and probably mediate the attachment of the 5S RNA into the large ribosomal subunit, where it forms part of the central protuberance. The sequence is that of Large ribosomal subunit protein uL18 from Chlamydia caviae (strain ATCC VR-813 / DSM 19441 / 03DC25 / GPIC) (Chlamydophila caviae).